Reading from the N-terminus, the 103-residue chain is Ubiquitin-related modifier 1 (103 aa).

Glycine 103 carries the post-translational modification 1-thioglycine. Residue glycine 103 forms a Glycyl lysine isopeptide (Gly-Lys) (interchain with K-? in acceptor proteins) linkage.

Belongs to the URM1 family. In terms of processing, C-terminal thiocarboxylation occurs in 2 steps, it is first acyl-adenylated (-COAMP) via the hesA/moeB/thiF part of UBA4, then thiocarboxylated (-COSH) via the rhodanese domain of UBA4.

It localises to the cytoplasm. It participates in tRNA modification; 5-methoxycarbonylmethyl-2-thiouridine-tRNA biosynthesis. Functionally, acts as a sulfur carrier required for 2-thiolation of mcm(5)S(2)U at tRNA wobble positions of cytosolic tRNA(Lys), tRNA(Glu) and tRNA(Gln). Serves as sulfur donor in tRNA 2-thiolation reaction by being thiocarboxylated (-COSH) at its C-terminus by the MOCS3 homolog UBA4. The sulfur is then transferred to tRNA to form 2-thiolation of mcm(5)S(2)U. Prior mcm(5) tRNA modification by the elongator complex is required for 2-thiolation. Also acts as a ubiquitin-like protein (UBL) that is covalently conjugated via an isopeptide bond to lysine residues of target proteins such as AHP1. The thiocarboxylated form serves as substrate for conjugation and oxidative stress specifically induces the formation of UBL-protein conjugates. The sequence is that of Ubiquitin-related modifier 1 from Vanderwaltozyma polyspora (strain ATCC 22028 / DSM 70294 / BCRC 21397 / CBS 2163 / NBRC 10782 / NRRL Y-8283 / UCD 57-17) (Kluyveromyces polysporus).